Here is a 119-residue protein sequence, read N- to C-terminus: Beta-2-microglobulin (119 aa).

The N-terminal stretch at 1–20 (MARFVAVALLVLLSLSGLET) is a signal peptide. In terms of domain architecture, Ig-like C1-type spans 25–114 (PKIQVYSRHP…VTFSTPKTVK (90 aa)). C45 and C100 form a disulfide bridge.

Belongs to the beta-2-microglobulin family. As to quaternary structure, heterodimer of an alpha chain and a beta chain. Beta-2-microglobulin is the beta-chain of major histocompatibility complex class I molecules.

Its subcellular location is the secreted. Component of the class I major histocompatibility complex (MHC). Involved in the presentation of peptide antigens to the immune system. This is Beta-2-microglobulin (B2M) from Callicebus personatus personatus (Masked titi).